A 372-amino-acid chain; its full sequence is Alanine dehydrogenase 2 (372 aa).

The active site involves His95. NAD(+) is bound at residue 169-199 (KVTIIGGGQAGTNAAKIALGLGADVTILDVN).

The protein belongs to the AlaDH/PNT family.

It carries out the reaction L-alanine + NAD(+) + H2O = pyruvate + NH4(+) + NADH + H(+). The protein operates within amino-acid degradation; L-alanine degradation via dehydrogenase pathway; NH(3) and pyruvate from L-alanine: step 1/1. In terms of biological role, may play a role in cell wall synthesis as L-alanine is an important constituent of the peptidoglycan layer. This is Alanine dehydrogenase 2 (ald2) from Staphylococcus aureus (strain MRSA252).